Here is a 143-residue protein sequence, read N- to C-terminus: uncharacterized protein (143 aa).

It is found in the mitochondrion. This is an uncharacterized protein from Arabidopsis thaliana (Mouse-ear cress).